The primary structure comprises 474 residues: Trehalose-6-phosphate synthase (474 aa).

Arg10 contributes to the D-glucose 6-phosphate binding site. 22–23 (GG) provides a ligand contact to UDP-alpha-D-glucose. The D-glucose 6-phosphate site is built by Tyr77 and Asp131. UDP-alpha-D-glucose contacts are provided by Arg263 and Lys268. Residue Arg301 coordinates D-glucose 6-phosphate. Residues Phe340 and 366–370 (LVAKE) contribute to the UDP-alpha-D-glucose site.

It belongs to the glycosyltransferase 20 family. Homotetramer.

The catalysed reaction is D-glucose 6-phosphate + UDP-alpha-D-glucose = alpha,alpha-trehalose 6-phosphate + UDP + H(+). It participates in glycan biosynthesis; trehalose biosynthesis. Functionally, probably involved in the osmoprotection via the biosynthesis of trehalose. Catalyzes the transfer of glucose from UDP-alpha-D-glucose (UDP-Glc) to D-glucose 6-phosphate (Glc-6-P) to form trehalose-6-phosphate. Acts with retention of the anomeric configuration of the UDP-sugar donor. The sequence is that of Trehalose-6-phosphate synthase from Shigella dysenteriae serotype 1 (strain Sd197).